The following is a 560-amino-acid chain: Putative transport protein VS_1837 (560 aa).

The next 5 helical transmembrane spans lie at 5 to 25, 37 to 57, 66 to 86, 91 to 111, and 155 to 175; these read VVLL…SIGL, LGNS…GFSF, FMLF…GIFF, HYLI…YFCS, and LGLV…VGLI. 2 consecutive RCK C-terminal domains span residues 203-292 and 293-376; these read RGLG…FRNG and KEVF…KIGF. The next 6 helical transmembrane spans lie at 386-406, 409-429, 450-470, 478-498, 506-526, and 539-559; these read LTAF…TMTF, VSFG…LGFL, LGLM…IFEH, VIGI…LVGA, ALLF…DIVN, and AGTY…IIII.

Belongs to the AAE transporter (TC 2.A.81) family. YbjL subfamily.

The protein resides in the cell membrane. The chain is Putative transport protein VS_1837 from Vibrio atlanticus (strain LGP32) (Vibrio splendidus (strain Mel32)).